Here is a 343-residue protein sequence, read N- to C-terminus: Glyceraldehyde-3-phosphate dehydrogenase (343 aa).

NAD(+) is bound by residues 12–13 and glycine 114; that span reads SI. Residue 143 to 145 participates in D-glyceraldehyde 3-phosphate binding; sequence SCN. Cysteine 144 serves as the catalytic Nucleophile. Arginine 172 is a binding site for NAD(+). Position 198 to 199 (198 to 199) interacts with D-glyceraldehyde 3-phosphate; the sequence is HG. Glutamine 307 lines the NAD(+) pocket.

It belongs to the glyceraldehyde-3-phosphate dehydrogenase family. In terms of assembly, homotetramer.

It localises to the cytoplasm. The enzyme catalyses D-glyceraldehyde 3-phosphate + phosphate + NADP(+) = (2R)-3-phospho-glyceroyl phosphate + NADPH + H(+). The catalysed reaction is D-glyceraldehyde 3-phosphate + phosphate + NAD(+) = (2R)-3-phospho-glyceroyl phosphate + NADH + H(+). The protein operates within carbohydrate degradation; glycolysis; pyruvate from D-glyceraldehyde 3-phosphate: step 1/5. The chain is Glyceraldehyde-3-phosphate dehydrogenase (gap) from Methanocaldococcus jannaschii (strain ATCC 43067 / DSM 2661 / JAL-1 / JCM 10045 / NBRC 100440) (Methanococcus jannaschii).